The primary structure comprises 263 residues: MPEGPEIRRAADKLVEAVVGKTLTRVWFAFPELKPYEAELVGQQVRQIATRGKALLTYFSNDRVLYSHNQLYGVWRVVNAGESPETKRDLRVRLETQNRAILLYSASDIEMLTPEALTTHPFLQRIGPDVLDLSLTPEQVYERLLLPRFRRRQFSGLLLDQAFLAGLGNYLRVEILWQAQLAPQHTAAQLNEEQLQTLSQALLEIPRLSYNTRGTVDENHHHGAIFSFKVFHRDGESCERCGGIIERTMLSSRPFYWCPHCQR.

The Schiff-base intermediate with DNA role is filled by P2. Residue E3 is the Proton donor of the active site. Residue K53 is the Proton donor; for beta-elimination activity of the active site. The DNA site is built by Q70, R125, and N169. An FPG-type zinc finger spans residues 229–263 (KVFHRDGESCERCGGIIERTMLSSRPFYWCPHCQR). The active-site Proton donor; for delta-elimination activity is R253.

This sequence belongs to the FPG family. Zn(2+) serves as cofactor.

It catalyses the reaction 2'-deoxyribonucleotide-(2'-deoxyribose 5'-phosphate)-2'-deoxyribonucleotide-DNA = a 3'-end 2'-deoxyribonucleotide-(2,3-dehydro-2,3-deoxyribose 5'-phosphate)-DNA + a 5'-end 5'-phospho-2'-deoxyribonucleoside-DNA + H(+). In terms of biological role, involved in base excision repair of DNA damaged by oxidation or by mutagenic agents. Acts as a DNA glycosylase that recognizes and removes damaged bases. Has a preference for oxidized pyrimidines, such as thymine glycol, 5,6-dihydrouracil and 5,6-dihydrothymine. Has AP (apurinic/apyrimidinic) lyase activity and introduces nicks in the DNA strand. Cleaves the DNA backbone by beta-delta elimination to generate a single-strand break at the site of the removed base with both 3'- and 5'-phosphates. This chain is Endonuclease 8, found in Pectobacterium carotovorum subsp. carotovorum (strain PC1).